A 421-amino-acid chain; its full sequence is Gamma-glutamyl phosphate reductase (421 aa).

This sequence belongs to the gamma-glutamyl phosphate reductase family.

The protein localises to the cytoplasm. It carries out the reaction L-glutamate 5-semialdehyde + phosphate + NADP(+) = L-glutamyl 5-phosphate + NADPH + H(+). It functions in the pathway amino-acid biosynthesis; L-proline biosynthesis; L-glutamate 5-semialdehyde from L-glutamate: step 2/2. Catalyzes the NADPH-dependent reduction of L-glutamate 5-phosphate into L-glutamate 5-semialdehyde and phosphate. The product spontaneously undergoes cyclization to form 1-pyrroline-5-carboxylate. The chain is Gamma-glutamyl phosphate reductase from Pseudomonas aeruginosa (strain UCBPP-PA14).